The primary structure comprises 74 residues: Imcroporin (74 aa).

Positions 1-22 are cleaved as a signal peptide; it reads MKFQYLLAVFLIVLVVTDHCQA. A Lysine amide; partial modification is found at K39. A propeptide spanning residues 45–74 is cleaved from the precursor; the sequence is QLEARFEPKQRNFRKRELDFEKLFANMPDY.

This sequence belongs to the non-disulfide-bridged peptide (NDBP) superfamily. Short antimicrobial peptide (group 4) family. As to expression, expressed by the venom gland.

It is found in the secreted. The protein localises to the target cell membrane. In terms of biological role, has potent antibacterial activity against Gram-positive bacteria M.luteus, B.thuringiensis, S.aureus and B.subtilis, but not Gram-negative bacteria. Shows a weak cytotoxicity effect against mammalian cell lines and relatively low hemolytic activity against human erythrocytes. This chain is Imcroporin, found in Isometrus maculatus (Lesser brown scorpion).